The sequence spans 245 residues: Tryptophan synthase alpha chain (245 aa).

Catalysis depends on proton acceptor residues Glu35 and Asp46.

Belongs to the TrpA family. As to quaternary structure, tetramer of two alpha and two beta chains.

It carries out the reaction (1S,2R)-1-C-(indol-3-yl)glycerol 3-phosphate + L-serine = D-glyceraldehyde 3-phosphate + L-tryptophan + H2O. Its pathway is amino-acid biosynthesis; L-tryptophan biosynthesis; L-tryptophan from chorismate: step 5/5. The alpha subunit is responsible for the aldol cleavage of indoleglycerol phosphate to indole and glyceraldehyde 3-phosphate. The polypeptide is Tryptophan synthase alpha chain (Sulfurisphaera tokodaii (strain DSM 16993 / JCM 10545 / NBRC 100140 / 7) (Sulfolobus tokodaii)).